The primary structure comprises 86 residues: RNA-binding protein Hfq (86 aa).

A Sm domain is found at 9–68 (DPYLNTLRKEKVGVSIYLVNGIKLQGTIESFDQFVILLKNTVSQMVYKHAISTVVPVRPI).

This sequence belongs to the Hfq family. Homohexamer.

Functionally, RNA chaperone that binds small regulatory RNA (sRNAs) and mRNAs to facilitate mRNA translational regulation in response to envelope stress, environmental stress and changes in metabolite concentrations. Also binds with high specificity to tRNAs. The protein is RNA-binding protein Hfq of Pseudomonas fluorescens (strain Pf0-1).